We begin with the raw amino-acid sequence, 193 residues long: Acyl carrier protein phosphodiesterase (193 aa).

It belongs to the AcpH family.

It catalyses the reaction holo-[ACP] + H2O = apo-[ACP] + (R)-4'-phosphopantetheine + H(+). Functionally, converts holo-ACP to apo-ACP by hydrolytic cleavage of the phosphopantetheine prosthetic group from ACP. The chain is Acyl carrier protein phosphodiesterase from Yersinia pestis.